We begin with the raw amino-acid sequence, 419 residues long: UDP-N-acetylglucosamine 1-carboxyvinyltransferase (419 aa).

Residue 22-23 participates in phosphoenolpyruvate binding; that stretch reads KN. R93 lines the UDP-N-acetyl-alpha-D-glucosamine pocket. C117 acts as the Proton donor in catalysis. Position 117 is a 2-(S-cysteinyl)pyruvic acid O-phosphothioketal (C117). UDP-N-acetyl-alpha-D-glucosamine is bound by residues 122-126, D305, and I327; that span reads RPVDQ.

The protein belongs to the EPSP synthase family. MurA subfamily.

The protein resides in the cytoplasm. It carries out the reaction phosphoenolpyruvate + UDP-N-acetyl-alpha-D-glucosamine = UDP-N-acetyl-3-O-(1-carboxyvinyl)-alpha-D-glucosamine + phosphate. Its pathway is cell wall biogenesis; peptidoglycan biosynthesis. Cell wall formation. Adds enolpyruvyl to UDP-N-acetylglucosamine. In Dichelobacter nodosus (strain VCS1703A), this protein is UDP-N-acetylglucosamine 1-carboxyvinyltransferase.